The primary structure comprises 246 residues: MSKRTIQLNCDMGESFGVWTMGADEEVMPWIDMANIACGFHASDPHVMSRTIDLALEHEVMIGAHPSYPDLQGFGRRSLAMNEQEVSEIILYQVGALKALCESKNGQLSYVKPHGALYNDMMSDPSIFRAVVDAVSCFNLPLMVLASANNQDYLDIADRFDVPLLFEAFADRTYLANGKLTPRSQPNAVLSSEEAILNQVRQIARYGKVTSSDGFVIPIEADTLCVHGDNPNAVSLIARIRAALDE.

This sequence belongs to the LamB/PxpA family. Forms a complex composed of PxpA, PxpB and PxpC.

It carries out the reaction 5-oxo-L-proline + ATP + 2 H2O = L-glutamate + ADP + phosphate + H(+). Functionally, catalyzes the cleavage of 5-oxoproline to form L-glutamate coupled to the hydrolysis of ATP to ADP and inorganic phosphate. The sequence is that of 5-oxoprolinase subunit A from Vibrio cholerae serotype O1 (strain M66-2).